A 265-amino-acid polypeptide reads, in one-letter code: Shikimate dehydrogenase (NADP(+)) (265 aa).

Shikimate is bound by residues 15 to 17 (SKS) and Thr-62. The active-site Proton acceptor is Lys-66. 2 residues coordinate shikimate: Asn-87 and Asp-102. NADP(+) contacts are provided by residues 127 to 131 (GAGGA), 151 to 156 (NRTVSR), and Met-212. Tyr-214 provides a ligand contact to shikimate. Gly-234 provides a ligand contact to NADP(+).

This sequence belongs to the shikimate dehydrogenase family. As to quaternary structure, homodimer.

It catalyses the reaction shikimate + NADP(+) = 3-dehydroshikimate + NADPH + H(+). It participates in metabolic intermediate biosynthesis; chorismate biosynthesis; chorismate from D-erythrose 4-phosphate and phosphoenolpyruvate: step 4/7. In terms of biological role, involved in the biosynthesis of the chorismate, which leads to the biosynthesis of aromatic amino acids. Catalyzes the reversible NADPH linked reduction of 3-dehydroshikimate (DHSA) to yield shikimate (SA). The sequence is that of Shikimate dehydrogenase (NADP(+)) from Thiobacillus denitrificans (strain ATCC 25259 / T1).